The chain runs to 256 residues: uncharacterized protein (256 aa).

Disordered regions lie at residues 1-38 (MGKTKDIGDDDTVASEFWSGALSQPSSVPTRPRTPNRD) and 51-75 (PRPSILQPGPARLSRARAGGTRCPQ).

This is an uncharacterized protein from Homo sapiens (Human).